Here is a 142-residue protein sequence, read N- to C-terminus: UPF0102 protein Bamb_0202 (142 aa).

The disordered stretch occupies residues 1–23 (MCHAAPAAPASGRGLPHGGGNFS).

Belongs to the UPF0102 family.

The protein is UPF0102 protein Bamb_0202 of Burkholderia ambifaria (strain ATCC BAA-244 / DSM 16087 / CCUG 44356 / LMG 19182 / AMMD) (Burkholderia cepacia (strain AMMD)).